The sequence spans 527 residues: Calcium and calcium/calmodulin-dependent serine/threonine-protein kinase (527 aa).

The 303-residue stretch at 12–314 (YEVSEILGRG…AQELLSDPWV (303 aa)) folds into the Protein kinase domain. ATP is bound at residue 18–26 (LGRGGFSVV). Residues 25–51 (VVRKGTRKSNNDDEKSQSQSKSQSQSQ) are disordered. Low complexity predominate over residues 41 to 51 (QSQSKSQSQSQ). Lys55 is a binding site for ATP. A disordered region spans residues 59 to 78 (RLGTSNNLPRKKDGGENSTE). Asp179 acts as the Proton acceptor in catalysis. Residues 239–255 (MWSLGVILYILLSGYPP) form a helical membrane-spanning segment. The residue at position 279 (Thr279) is a Phosphothreonine. The interval 337–350 (ARRKLRAAAIASVW) is calmodulin-binding. Residues 358-379 (TKKLKSLVGSYDLKEDEIENLR) adopt a coiled-coil conformation. EF-hand domains lie at 408 to 443 (SLIP…LKNS), 444 to 479 (KGED…LPYD), and 486 to 521 (TEPG…DSSL). Asp421, Asn423, Asp425, Thr427, Glu432, Asp457, Asp459, Ser461, Cys463, Glu468, Asp499, Asn501, Asp503, Lys505, and Glu510 together coordinate Ca(2+).

The protein belongs to the protein kinase superfamily. CAMK Ser/Thr protein kinase family. CaMK subfamily. In terms of processing, autophosphorylation.

The protein resides in the membrane. It catalyses the reaction L-seryl-[protein] + ATP = O-phospho-L-seryl-[protein] + ADP + H(+). The enzyme catalyses L-threonyl-[protein] + ATP = O-phospho-L-threonyl-[protein] + ADP + H(+). With respect to regulation, activated by calcium. Autophosphorylation may play an important role in the regulation of the kinase activity. Its function is as follows. Protein kinase that recognizes the calcium spiking induced by Nod factors and translates this signal to components controlling nodulation and mycorrhizal infection responses. In Pisum sativum (Garden pea), this protein is Calcium and calcium/calmodulin-dependent serine/threonine-protein kinase (SYM9).